The following is a 1538-amino-acid chain: Phenolphthiocerol/phthiocerol polyketide synthase subunit B (1538 aa).

The Ketosynthase family 3 (KS3) domain maps to 33 to 455 (AEPVAVVGIG…GTNAHVIIEQ (423 aa)). Residues Cys205, His340, and His377 each act as for beta-ketoacyl synthase activity in the active site. Positions 553–882 (DGSPGPGTVF…TNLYTADIAH (330 aa)) are acyltransferase. Residue Ser649 is the For malonyltransferase activity of the active site. Position 1153 to 1196 (1153 to 1196 (SQLVIGATGNIGPHLIRQLARMGAKTIVAMARKPGALDELTQCL)) interacts with NADP(+). The beta-ketoacyl reductase stretch occupies residues 1153–1328 (SQLVIGATGN…TVVDWGLWKS (176 aa)). The region spanning 1423 to 1498 (DMLFDHVGAL…SLTDYLATVL (76 aa)) is the Carrier domain. Ser1458 is subject to O-(pantetheine 4'-phosphoryl)serine.

The cofactor is NADP(+). Pantetheine 4'-phosphate is required as a cofactor.

It catalyses the reaction icosanoyl-[(phenol)carboxyphthiodiolenone synthase] + 2 (S)-methylmalonyl-CoA + 3 malonyl-CoA + 5 NADPH + 10 H(+) = C32-carboxyphthiodiolenone-[(phenol)carboxyphthiodiolenone synthase] + 5 CO2 + 5 NADP(+) + 5 CoA + 2 H2O. The catalysed reaction is docosanoyl-[(phenol)carboxyphthiodiolenone synthase] + 2 (S)-methylmalonyl-CoA + 3 malonyl-CoA + 5 NADPH + 10 H(+) = C34-carboxyphthiodiolenone-[(phenol)carboxyphthiodiolenone synthase] + 5 CO2 + 5 NADP(+) + 5 CoA + 2 H2O. The enzyme catalyses 17-(4-hydroxyphenyl)heptadecanoyl-[(phenol)carboxyphthiodiolenone synthase] + 2 (S)-methylmalonyl-CoA + 3 malonyl-CoA + 5 NADPH + 10 H(+) = C35-(phenol)carboxyphthiodiolenone-[(phenol)carboxyphthiodiolenone synthase] + 5 CO2 + 5 NADP(+) + 5 CoA + 2 H2O. It carries out the reaction 19-(4-hydroxyphenyl)nonadecanoyl-[(phenol)carboxyphthiodiolenone synthase] + 2 (S)-methylmalonyl-CoA + 3 malonyl-CoA + 5 NADPH + 10 H(+) = C37-(phenol)carboxyphthiodiolenone-[(phenol)carboxyphthiodiolenone synthase] + 5 CO2 + 5 NADP(+) + 5 CoA + 2 H2O. It functions in the pathway lipid metabolism; fatty acid biosynthesis. Its function is as follows. Part of the PpsABCDE complex involved in the biosynthesis of the lipid core common to phthiocerols and phenolphthiocerols by successive additions of malonyl-CoA or methylmalonyl-CoA extender units. PpsA can accept as substrate the activated forms of either icosanoyl (C20), docosanoyl (C22) or lignoceroyl (C24) groups from FadD26, or a (4-hydroxyphenyl)-C17 or (4-hydroxyphenyl)-C19 fatty acyl from FadD29. PpsA initiates the biosynthesis and extends its substrate using a malonyl-CoA extender unit. The PpsB and PpsC proteins add the second and third malonyl-CoA extender units. PpsD adds an (R)-methylmalonyl unit and PpsE adds a second (R)-methylmalonyl unit. The incorporation of the methylmalonyl units results in formation of two branched methyl groups in the elongated product. This chain is Phenolphthiocerol/phthiocerol polyketide synthase subunit B (ppsB), found in Mycobacterium tuberculosis (strain CDC 1551 / Oshkosh).